The sequence spans 287 residues: NAD kinase (287 aa).

Catalysis depends on Asp-56, which acts as the Proton acceptor. Residues 56 to 57, Arg-61, 128 to 129, and Asp-156 each bind NAD(+); these read DG and ND.

This sequence belongs to the NAD kinase family. A divalent metal cation serves as cofactor.

It localises to the cytoplasm. It catalyses the reaction NAD(+) + ATP = ADP + NADP(+) + H(+). Involved in the regulation of the intracellular balance of NAD and NADP, and is a key enzyme in the biosynthesis of NADP. Catalyzes specifically the phosphorylation on 2'-hydroxyl of the adenosine moiety of NAD to yield NADP. The sequence is that of NAD kinase from Thermomicrobium roseum (strain ATCC 27502 / DSM 5159 / P-2).